A 673-amino-acid polypeptide reads, in one-letter code: Ion-translocating oxidoreductase complex subunit C (673 aa).

2 4Fe-4S ferredoxin-type domains span residues 368–397 (MGAPQEEKSCIRCSACADACPADLLPQQLY) and 407–436 (KATAHHIADCIECGACAWVCPSNIPLVQYF). [4Fe-4S] cluster is bound by residues Cys-377, Cys-380, Cys-383, Cys-387, Cys-416, Cys-419, Cys-422, and Cys-426. Disordered regions lie at residues 534–553 (QARAKQAAHPVADSAISGGA) and 563–653 (IARA…AAVA).

The protein belongs to the 4Fe4S bacterial-type ferredoxin family. RnfC subfamily. In terms of assembly, the complex is composed of six subunits: RsxA, RsxB, RsxC, RsxD, RsxE and RsxG. Requires [4Fe-4S] cluster as cofactor.

Its subcellular location is the cell inner membrane. Its function is as follows. Part of a membrane-bound complex that couples electron transfer with translocation of ions across the membrane. Required to maintain the reduced state of SoxR. This is Ion-translocating oxidoreductase complex subunit C from Salmonella gallinarum (strain 287/91 / NCTC 13346).